The primary structure comprises 406 residues: Argininosuccinate synthase (406 aa).

Residues 11–19 and A38 each bind ATP; that span reads AYSGGLDTS. L-citrulline-binding residues include Y91 and S96. G121 is an ATP binding site. L-aspartate-binding residues include T123, N127, and D128. N127 is an L-citrulline binding site. L-citrulline contacts are provided by R131, S181, S190, E266, and Y278.

Belongs to the argininosuccinate synthase family. Type 1 subfamily. Homotetramer.

The protein localises to the cytoplasm. The enzyme catalyses L-citrulline + L-aspartate + ATP = 2-(N(omega)-L-arginino)succinate + AMP + diphosphate + H(+). It participates in amino-acid biosynthesis; L-arginine biosynthesis; L-arginine from L-ornithine and carbamoyl phosphate: step 2/3. This Campylobacter jejuni subsp. jejuni serotype O:23/36 (strain 81-176) protein is Argininosuccinate synthase.